We begin with the raw amino-acid sequence, 145 residues long: Putative pre-16S rRNA nuclease (145 aa).

Belongs to the YqgF nuclease family.

It localises to the cytoplasm. Functionally, could be a nuclease involved in processing of the 5'-end of pre-16S rRNA. The chain is Putative pre-16S rRNA nuclease from Levilactobacillus brevis (strain ATCC 367 / BCRC 12310 / CIP 105137 / JCM 1170 / LMG 11437 / NCIMB 947 / NCTC 947) (Lactobacillus brevis).